Here is a 90-residue protein sequence, read N- to C-terminus: Acylphosphatase (90 aa).

The region spanning 5–90 (GCKVIVSGIV…YQKTNDFIAC (86 aa)) is the Acylphosphatase-like domain. Active-site residues include R20 and N38.

It belongs to the acylphosphatase family.

The enzyme catalyses an acyl phosphate + H2O = a carboxylate + phosphate + H(+). This is Acylphosphatase (acyP) from Psychromonas ingrahamii (strain DSM 17664 / CCUG 51855 / 37).